The chain runs to 485 residues: Bcl-2-like protein 13 (485 aa).

A BH4 motif is present at residues 14–30; it reads ETKYVVLSYLGLLSQEK. Ser-38 is modified (phosphoserine). Residues 100 to 116 carry the BH3 motif; the sequence is MEDCLAHLGEKVSQELK. Residues 147–157 carry the BH1 motif; that stretch reads ASGWNKILVPL. A BH2 motif is present at residues 193–206; that stretch reads YIIQQGGWGTVFSL. The tract at residues 218–248 is disordered; it reads AEDSNDIYILPSDNSGQVSPPESPTVTTSWQ. Positions 229-248 are enriched in polar residues; sequence SDNSGQVSPPESPTVTTSWQ. Residues 246 to 256 form an A repeat; that stretch reads SWQSESLPVSL. Phosphoserine is present on residues Ser-259, Ser-261, Ser-303, Ser-326, Ser-371, Ser-375, Ser-410, Ser-420, Ser-426, Ser-429, and Ser-444. One copy of the A; approximate repeat lies at 261-271; sequence SWHTESLPVSL. The disordered stretch occupies residues 418–451; that stretch reads EESLVEELSPASEKKPVPPSEGKSRLSPAGEMKP. The B repeat unit spans residues 425–441; sequence LSPASEKKPVPPSEGKS. The stretch at 443–459 is one B; approximate repeat; sequence LSPAGEMKPMPLSEGKS. A helical membrane pass occupies residues 460–480; it reads ILLFGGAAAVAILAVAIGVAL.

The protein belongs to the Bcl-2 family. Monomer. As to expression, ubiquitous, with the highest levels of expression in heart, placenta and pancreas.

It is found in the mitochondrion membrane. Its subcellular location is the nucleus. Functionally, may promote the activation of caspase-3 and apoptosis. This chain is Bcl-2-like protein 13 (BCL2L13), found in Homo sapiens (Human).